A 503-amino-acid polypeptide reads, in one-letter code: Glutamate--tRNA ligase (503 aa).

The 'HIGH' region signature appears at 12 to 22 (PSPTGYLHVGG). The 'KMSKS' region signature appears at 259 to 263 (KLSKR). Lys-262 provides a ligand contact to ATP.

Belongs to the class-I aminoacyl-tRNA synthetase family. Glutamate--tRNA ligase type 1 subfamily. In terms of assembly, monomer.

The protein localises to the cytoplasm. The catalysed reaction is tRNA(Glu) + L-glutamate + ATP = L-glutamyl-tRNA(Glu) + AMP + diphosphate. Catalyzes the attachment of glutamate to tRNA(Glu) in a two-step reaction: glutamate is first activated by ATP to form Glu-AMP and then transferred to the acceptor end of tRNA(Glu). The polypeptide is Glutamate--tRNA ligase (Chloroherpeton thalassium (strain ATCC 35110 / GB-78)).